We begin with the raw amino-acid sequence, 34 residues long: Potassium channel toxin alpha-KTx 6 hetlaxin (34 aa).

Disulfide bonds link C3-C24, C9-C29, C13-C31, and C19-C34. Residue C34 is modified to Cysteine amide.

Post-translationally, contains 4 disulfide bonds. Expressed by the venom gland.

It is found in the secreted. Functionally, binds to voltage-gated potassium channels Kv1.3/KCNA3 (IC(50)=0.48 uM) and Kv1.1/KCNA1 (IC(50)=6.7 uM) and inhibits channel activity. The polypeptide is Potassium channel toxin alpha-KTx 6 hetlaxin (Heterometrus laoticus (Thai giant scorpion)).